The following is a 530-amino-acid chain: Arginine-containing cyclodipeptide synthase pthA (530 aa).

Residues 419–423 (DDRAE) carry the Conserved DDXXE motif motif.

Belongs to the arginine-containing cyclodipeptide synthase family.

It carries out the reaction L-aspartyl-tRNA(Asp) + L-arginyl-tRNA(Arg) = cyclo(L-arginyl-L-aspartyl) + tRNA(Asp) + tRNA(Arg) + 2 H(+). The protein operates within secondary metabolite biosynthesis. Functionally, arginine-containing cyclodipeptide synthase; part of the cluster that mediates the biosynthesis of a highly modified cyclo-arginine-aspartate dipeptide (cRD). Within the pathway, pthA acts as the scaffold-generating enzyme and is responsible for formation of the cyclo-Arg-Asp diketopiperazine (cRW) from L-arginyl-tRNA(Arg) + L-aspartyl-tRNA(Asp). Additional enzymes from the cluster then further modify the cyclo-Arg-Asp diketopiperazine (cRW) scaffold. The sequence is that of Arginine-containing cyclodipeptide synthase pthA from Penicillium thymicola.